We begin with the raw amino-acid sequence, 268 residues long: Phosphatidylglycerol--prolipoprotein diacylglyceryl transferase (268 aa).

4 consecutive transmembrane segments (helical) span residues 23-43 (WYAL…LALA), 58-78 (FLTW…VLFY), 96-116 (GGMS…LFCW), and 119-139 (GLSP…GLFF). Arg141 lines the a 1,2-diacyl-sn-glycero-3-phospho-(1'-sn-glycerol) pocket. 3 consecutive transmembrane segments (helical) span residues 181 to 201 (SFLE…MPAV), 206 to 226 (GMTA…AEFF), and 238 to 258 (AGAT…VWLV).

Belongs to the Lgt family.

It localises to the cell inner membrane. It carries out the reaction L-cysteinyl-[prolipoprotein] + a 1,2-diacyl-sn-glycero-3-phospho-(1'-sn-glycerol) = an S-1,2-diacyl-sn-glyceryl-L-cysteinyl-[prolipoprotein] + sn-glycerol 1-phosphate + H(+). The protein operates within protein modification; lipoprotein biosynthesis (diacylglyceryl transfer). Its function is as follows. Catalyzes the transfer of the diacylglyceryl group from phosphatidylglycerol to the sulfhydryl group of the N-terminal cysteine of a prolipoprotein, the first step in the formation of mature lipoproteins. The protein is Phosphatidylglycerol--prolipoprotein diacylglyceryl transferase of Azospirillum brasilense.